The following is a 292-amino-acid chain: NAD kinase (292 aa).

Residue Asp-74 is the Proton acceptor of the active site. NAD(+) is bound by residues Asp-74–Gly-75, Asn-147–Glu-148, Asp-177, and Thr-188–Ser-193.

The protein belongs to the NAD kinase family. The cofactor is a divalent metal cation.

The protein localises to the cytoplasm. It catalyses the reaction NAD(+) + ATP = ADP + NADP(+) + H(+). Functionally, involved in the regulation of the intracellular balance of NAD and NADP, and is a key enzyme in the biosynthesis of NADP. Catalyzes specifically the phosphorylation on 2'-hydroxyl of the adenosine moiety of NAD to yield NADP. The sequence is that of NAD kinase from Cytophaga hutchinsonii (strain ATCC 33406 / DSM 1761 / CIP 103989 / NBRC 15051 / NCIMB 9469 / D465).